Consider the following 289-residue polypeptide: HTH-type transcriptional activator AmpR (289 aa).

Residues 6–63 (LPLNALRVFEVAMRQGSFTKAAIELRVTQAAVSHQVARLEDLLGTALFLRTSQGLIPT) form the HTH lysR-type domain. The segment at residues 23-42 (FTKAAIELRVTQAAVSHQVA) is a DNA-binding region (H-T-H motif).

Belongs to the LysR transcriptional regulatory family.

The protein resides in the cytoplasm. Its function is as follows. This protein is a positive regulator of gene expression of cephalosporinase (AmpC). This chain is HTH-type transcriptional activator AmpR (ampR), found in Rhodobacter capsulatus (Rhodopseudomonas capsulata).